The chain runs to 120 residues: Large ribosomal subunit protein uL24 (120 aa).

The segment at 1–26 (MSKQPDKQRKSQRRAPLHERHKQVRA) is disordered. The segment covering 10–24 (KSQRRAPLHERHKQV) has biased composition (basic residues).

It belongs to the universal ribosomal protein uL24 family. As to quaternary structure, part of the 50S ribosomal subunit. Interacts weakly with protein L4.

One of two assembly initiator proteins, it binds directly to the 5'-end of the 23S rRNA, where it nucleates assembly of the 50S subunit. Its function is as follows. Stabilizes the tertiary rRNA structure within the 23S rRNA domain (domain I) to which it binds. Located at the polypeptide exit tunnel on the outside of the subunit. The protein is Large ribosomal subunit protein uL24 (rpl24) of Haloarcula marismortui (strain ATCC 43049 / DSM 3752 / JCM 8966 / VKM B-1809) (Halobacterium marismortui).